We begin with the raw amino-acid sequence, 266 residues long: Gap junction beta-4 protein (266 aa).

An intramembrane segment occupies 2 to 13 (NWAFLQGLLSGV). At 14-20 (NKYSTVL) the chain is on the cytoplasmic side. A helical membrane pass occupies residues 21-40 (SRIWLSVVFIFRVLVYVVAA). At 41-73 (EEVWDDEQKDFVCNTKQPGCPNVCYDEFFPVSH) the chain is on the extracellular side. 3 disulfide bridges follow: C53/C175, C60/C169, and C64/C164. Residues 74–94 (VRLWALQLILVTCPSLLVVMH) form a helical membrane-spanning segment. Topologically, residues 95-130 (VAYREERERKHHLKHGPNAPSLYDNLSKKRGGLWWT) are cytoplasmic. The chain crosses the membrane as a helical span at residues 131–151 (YLLSLIFKAAVDAGFLYIFHR). Residues 152–184 (LYKDYDMPRVVACSVEPCPHTVDCYISRPTEKK) lie on the Extracellular side of the membrane. A helical transmembrane segment spans residues 185–205 (VFTYFMVTTAAICILLNLSEV). At 206–266 (FYLVGKRCME…SAPVDAGGYP (61 aa)) the chain is on the cytoplasmic side.

Belongs to the connexin family. Beta-type (group I) subfamily. As to quaternary structure, a hemichannel or connexon is composed of a hexamer of connexins. A functional gap junction is formed by the apposition of two hemichannels. Forms heteromeric channels with GJB2.

The protein localises to the cell membrane. It localises to the cell junction. The protein resides in the gap junction. Functionally, structural component of gap junctions. Gap junctions are dodecameric channels that connect the cytoplasm of adjoining cells. They are formed by the docking of two hexameric hemichannels, one from each cell membrane. Small molecules and ions diffuse from one cell to a neighboring cell via the central pore. The chain is Gap junction beta-4 protein (GJB4) from Homo sapiens (Human).